The chain runs to 621 residues: Hemolysin ahh1 (621 aa).

The N-terminal stretch at 1-30 is a signal peptide; that stretch reads MKNKKPRKFITQAPTLSLLALALLAGSVQA. The 120-residue stretch at 491 to 610 folds into the Ricin B-type lectin domain; it reads RPVNLQLGGF…QNVSVRTLTS (120 aa).

This sequence belongs to the HlyA hemolysin family.

In terms of biological role, bacterial hemolysins are exotoxins that attack blood cell membranes and cause cell rupture by mechanisms not clearly defined. The sequence is that of Hemolysin ahh1 (ahh1) from Aeromonas hydrophila subsp. hydrophila (strain ATCC 7966 / DSM 30187 / BCRC 13018 / CCUG 14551 / JCM 1027 / KCTC 2358 / NCIMB 9240 / NCTC 8049).